The chain runs to 95 residues: Aspartyl/glutamyl-tRNA(Asn/Gln) amidotransferase subunit C (95 aa).

The protein belongs to the GatC family. Heterotrimer of A, B and C subunits.

The enzyme catalyses L-glutamyl-tRNA(Gln) + L-glutamine + ATP + H2O = L-glutaminyl-tRNA(Gln) + L-glutamate + ADP + phosphate + H(+). The catalysed reaction is L-aspartyl-tRNA(Asn) + L-glutamine + ATP + H2O = L-asparaginyl-tRNA(Asn) + L-glutamate + ADP + phosphate + 2 H(+). Its function is as follows. Allows the formation of correctly charged Asn-tRNA(Asn) or Gln-tRNA(Gln) through the transamidation of misacylated Asp-tRNA(Asn) or Glu-tRNA(Gln) in organisms which lack either or both of asparaginyl-tRNA or glutaminyl-tRNA synthetases. The reaction takes place in the presence of glutamine and ATP through an activated phospho-Asp-tRNA(Asn) or phospho-Glu-tRNA(Gln). The protein is Aspartyl/glutamyl-tRNA(Asn/Gln) amidotransferase subunit C of Gluconobacter oxydans (strain 621H) (Gluconobacter suboxydans).